A 150-amino-acid chain; its full sequence is 1,4-dihydroxy-2-naphthoyl-CoA hydrolase (150 aa).

Aspartate 19 is an active-site residue.

It belongs to the 4-hydroxybenzoyl-CoA thioesterase family. DHNA-CoA hydrolase subfamily.

The catalysed reaction is 1,4-dihydroxy-2-naphthoyl-CoA + H2O = 1,4-dihydroxy-2-naphthoate + CoA + H(+). Its pathway is cofactor biosynthesis; phylloquinone biosynthesis. The protein operates within quinol/quinone metabolism; 1,4-dihydroxy-2-naphthoate biosynthesis; 1,4-dihydroxy-2-naphthoate from chorismate: step 7/7. In terms of biological role, catalyzes the hydrolysis of 1,4-dihydroxy-2-naphthoyl-CoA (DHNA-CoA) to 1,4-dihydroxy-2-naphthoate (DHNA), a reaction involved in phylloquinone (vitamin K1) biosynthesis. The sequence is that of 1,4-dihydroxy-2-naphthoyl-CoA hydrolase from Prochlorococcus marinus (strain MIT 9515).